The chain runs to 648 residues: Bifunctional protein TilS/HprT (648 aa).

29 to 34 (SGGPDS) is an ATP binding site. D627 is a Mg(2+) binding site.

The protein in the N-terminal section; belongs to the tRNA(Ile)-lysidine synthase family. In the C-terminal section; belongs to the purine/pyrimidine phosphoribosyltransferase family. The cofactor is Mg(2+).

The protein localises to the cytoplasm. The enzyme catalyses IMP + diphosphate = hypoxanthine + 5-phospho-alpha-D-ribose 1-diphosphate. The catalysed reaction is GMP + diphosphate = guanine + 5-phospho-alpha-D-ribose 1-diphosphate. It carries out the reaction cytidine(34) in tRNA(Ile2) + L-lysine + ATP = lysidine(34) in tRNA(Ile2) + AMP + diphosphate + H(+). Functionally, ligates lysine onto the cytidine present at position 34 of the AUA codon-specific tRNA(Ile) that contains the anticodon CAU, in an ATP-dependent manner. Cytidine is converted to lysidine, thus changing the amino acid specificity of the tRNA from methionine to isoleucine. The sequence is that of Bifunctional protein TilS/HprT (tilS/hprT) from Listeria monocytogenes serovar 1/2a (strain ATCC BAA-679 / EGD-e).